A 504-amino-acid chain; its full sequence is Arabinose import ATP-binding protein AraG (504 aa).

ABC transporter domains follow at residues 8-243 and 256-499; these read LSFR…MVGR and YGEE…MPKV. 40 to 47 lines the ATP pocket; that stretch reads GENGAGKS.

This sequence belongs to the ABC transporter superfamily. Arabinose importer (TC 3.A.1.2.2) family. In terms of assembly, the complex is composed of two ATP-binding proteins (AraG), two transmembrane proteins (AraH) and a solute-binding protein (AraF).

The protein localises to the cell inner membrane. The enzyme catalyses L-arabinose(out) + ATP + H2O = L-arabinose(in) + ADP + phosphate + H(+). Its function is as follows. Part of the ABC transporter complex AraFGH involved in arabinose import. Responsible for energy coupling to the transport system. This chain is Arabinose import ATP-binding protein AraG, found in Shigella sonnei (strain Ss046).